The following is a 631-amino-acid chain: tRNA uridine 5-carboxymethylaminomethyl modification enzyme MnmG (631 aa).

Residues glycine 15–glycine 20, isoleucine 127, and serine 182 each bind FAD. Glycine 276 to phenylalanine 290 serves as a coordination point for NAD(+). Glutamine 373 serves as a coordination point for FAD.

This sequence belongs to the MnmG family. As to quaternary structure, homodimer. Heterotetramer of two MnmE and two MnmG subunits. FAD is required as a cofactor.

Its subcellular location is the cytoplasm. In terms of biological role, NAD-binding protein involved in the addition of a carboxymethylaminomethyl (cmnm) group at the wobble position (U34) of certain tRNAs, forming tRNA-cmnm(5)s(2)U34. In Streptococcus mutans serotype c (strain ATCC 700610 / UA159), this protein is tRNA uridine 5-carboxymethylaminomethyl modification enzyme MnmG.